A 120-amino-acid chain; its full sequence is Ribosome-binding factor A (120 aa).

This sequence belongs to the RbfA family. As to quaternary structure, monomer. Binds 30S ribosomal subunits, but not 50S ribosomal subunits or 70S ribosomes.

The protein resides in the cytoplasm. In terms of biological role, one of several proteins that assist in the late maturation steps of the functional core of the 30S ribosomal subunit. Associates with free 30S ribosomal subunits (but not with 30S subunits that are part of 70S ribosomes or polysomes). Required for efficient processing of 16S rRNA. May interact with the 5'-terminal helix region of 16S rRNA. This is Ribosome-binding factor A from Desulforamulus reducens (strain ATCC BAA-1160 / DSM 100696 / MI-1) (Desulfotomaculum reducens).